Here is a 216-residue protein sequence, read N- to C-terminus: MATLTPRQQQIYDLIRQTIQRTGFPPTRAEIAAEFGFSSPNAAEEHLRALARKGVIELTPGASRGIRLRAAGDTAQHQFSLPSMGLMQLTLPLVGRVAAGSPILAAEHIDRQYQVDPSLFSAQPDFLLKVRGMSMRDAGILDGDLLAVQRASEATNGKIVVARLGDDVTVKRFQRKGRHVELIAENPDFEPIHVDLDRDEFHLEGLAVGLIRPAAP.

The segment at residues 28 to 48 is a DNA-binding region (H-T-H motif); that stretch reads RAEIAAEFGFSSPNAAEEHLR. Active-site for autocatalytic cleavage activity residues include S134 and K171.

The protein belongs to the peptidase S24 family. In terms of assembly, homodimer.

The catalysed reaction is Hydrolysis of Ala-|-Gly bond in repressor LexA.. Its function is as follows. Represses a number of genes involved in the response to DNA damage (SOS response), including recA and lexA. In the presence of single-stranded DNA, RecA interacts with LexA causing an autocatalytic cleavage which disrupts the DNA-binding part of LexA, leading to derepression of the SOS regulon and eventually DNA repair. The polypeptide is LexA repressor (Ralstonia pickettii (strain 12J)).